A 91-amino-acid polypeptide reads, in one-letter code: Small ribosomal subunit protein bS18 (91 aa).

Belongs to the bacterial ribosomal protein bS18 family. In terms of assembly, part of the 30S ribosomal subunit. Forms a tight heterodimer with protein bS6.

In terms of biological role, binds as a heterodimer with protein bS6 to the central domain of the 16S rRNA, where it helps stabilize the platform of the 30S subunit. This is Small ribosomal subunit protein bS18 from Wolbachia sp. subsp. Brugia malayi (strain TRS).